The chain runs to 200 residues: Holliday junction branch migration complex subunit RuvA (200 aa).

The tract at residues 1 to 64 is domain I; that stretch reads MFAYFRGKLT…EDLLQLYGFS (64 aa). Positions 65-143 are domain II; that stretch reads GEEERQLFRL…KLSPVSALAS (79 aa). A flexible linker region spans residues 144-154; it reads PARLSSTLLRD. Residues 154–200 form a domain III region; sequence DDAVNALVTLGFSRIIVQKAVVAILEQNPGLTVEEVIKAALVSIHNS.

It belongs to the RuvA family. In terms of assembly, homotetramer. Forms an RuvA(8)-RuvB(12)-Holliday junction (HJ) complex. HJ DNA is sandwiched between 2 RuvA tetramers; dsDNA enters through RuvA and exits via RuvB. An RuvB hexamer assembles on each DNA strand where it exits the tetramer. Each RuvB hexamer is contacted by two RuvA subunits (via domain III) on 2 adjacent RuvB subunits; this complex drives branch migration. In the full resolvosome a probable DNA-RuvA(4)-RuvB(12)-RuvC(2) complex forms which resolves the HJ.

The protein resides in the cytoplasm. In terms of biological role, the RuvA-RuvB-RuvC complex processes Holliday junction (HJ) DNA during genetic recombination and DNA repair, while the RuvA-RuvB complex plays an important role in the rescue of blocked DNA replication forks via replication fork reversal (RFR). RuvA specifically binds to HJ cruciform DNA, conferring on it an open structure. The RuvB hexamer acts as an ATP-dependent pump, pulling dsDNA into and through the RuvAB complex. HJ branch migration allows RuvC to scan DNA until it finds its consensus sequence, where it cleaves and resolves the cruciform DNA. The polypeptide is Holliday junction branch migration complex subunit RuvA (Pelodictyon phaeoclathratiforme (strain DSM 5477 / BU-1)).